Consider the following 365-residue polypeptide: 3-isopropylmalate dehydrogenase (365 aa).

NAD(+) is bound at residue 78–91 (GPKWDTLPAEERPE). Substrate contacts are provided by R99, R109, R138, and D227. Residues D227, D251, and D255 each contribute to the Mg(2+) site. 285 to 297 (GSAPDIAGKNIAN) is a binding site for NAD(+).

It belongs to the isocitrate and isopropylmalate dehydrogenases family. LeuB type 1 subfamily. In terms of assembly, homodimer. It depends on Mg(2+) as a cofactor. Mn(2+) is required as a cofactor.

The protein localises to the cytoplasm. The enzyme catalyses (2R,3S)-3-isopropylmalate + NAD(+) = 4-methyl-2-oxopentanoate + CO2 + NADH. Its pathway is amino-acid biosynthesis; L-leucine biosynthesis; L-leucine from 3-methyl-2-oxobutanoate: step 3/4. Catalyzes the oxidation of 3-carboxy-2-hydroxy-4-methylpentanoate (3-isopropylmalate) to 3-carboxy-4-methyl-2-oxopentanoate. The product decarboxylates to 4-methyl-2 oxopentanoate. The polypeptide is 3-isopropylmalate dehydrogenase (Syntrophotalea carbinolica (strain DSM 2380 / NBRC 103641 / GraBd1) (Pelobacter carbinolicus)).